Reading from the N-terminus, the 140-residue chain is Hemoglobin subunit alpha-D (140 aa).

Positions 1-140 (MLTDSDKKLV…VCTVLAEKYR (140 aa)) constitute a Globin domain. Heme b-binding residues include His-57 and His-86.

This sequence belongs to the globin family. As to quaternary structure, heterotetramer of two alpha-D chains and two beta chains. Red blood cells.

Functionally, involved in oxygen transport from the lung to the various peripheral tissues. In Columba livia (Rock dove), this protein is Hemoglobin subunit alpha-D (HBAD).